We begin with the raw amino-acid sequence, 341 residues long: MAVVSEFLKQAWFMENLEQECIKCTQCVHGVPQQTNFDPSADVVALEKAMTAKGVDEATIIDIMTTRTNAQRPRIKAAYHKAKGKSLEEAMKRVLKSHLEDVVVALLKTPAQFDAEELRACMKGHGTDEDTLIEILASRNNKEIREACRYYKEVLKRDLTQDIISDTSGDFQKALVSLAKADRCENPHVNDELAEKDARALYEAGEQKKGTDINVFVTVLTARSYPHSEVFQKYTKYSKHDMNKAVDMEMKGDIEKCLTALVKCATSKPAFFAEKLHMAMKGFGTQHRDLIRIMVSRHEVDMNEIKGYYKKMYGISLCQAIMDELKGGYETILVALCGSDN.

Annexin repeat units lie at residues 37–108 (FDPS…ALLK), 109–180 (TPAQ…SLAK), 192–263 (ELAE…ALVK), and 267–338 (SKPA…ALCG).

Belongs to the annexin family. In terms of processing, in contrast to mammalian homologs, does not contain a tyrosine phosphorylation site in the N-terminal part.

Its subcellular location is the nucleus. It is found in the cytoplasm. The protein localises to the cell projection. It localises to the cilium. The protein resides in the basolateral cell membrane. Its function is as follows. Calcium/phospholipid-binding protein which promotes membrane fusion and is involved in exocytosis. This protein regulates phospholipase A2 activity. It seems to bind from two to four calcium ions with high affinity. This chain is Annexin A1 isoform p35 (CP35), found in Columba livia (Rock dove).